The sequence spans 466 residues: Oryzain beta chain (466 aa).

The first 21 residues, 1-21 (MAARAAAAAFLLLLIVGAATA), serve as a signal peptide directing secretion. A propeptide spans 22–140 (APDMSIISYN…ERYRHDGVEE (119 aa)) (activation peptide). 3 cysteine pairs are disulfide-bonded: Cys162–Cys205, Cys196–Cys238, and Cys296–Cys347. The active site involves Cys165. Residues His302 and Asn322 contribute to the active site. N-linked (GlcNAc...) asparagine glycosylation occurs at Asn341. The segment at 358-380 (KSGANPPKPSPTPPTPPTPPPPS) is disordered. A propeptide spans 362–466 (NPPKPSPTPP…KRTLAKLNTA (105 aa)) (removed in mature form). A compositionally biased stretch (pro residues) spans 363-380 (PPKPSPTPPTPPTPPPPS). 2 disulfides stabilise this stretch: Cys386–Cys398 and Cys392–Cys413. Residue Asn389 is glycosylated (N-linked (GlcNAc...) asparagine).

It belongs to the peptidase C1 family. As to expression, expressed only in seeds.

Its function is as follows. Probable thiol protease. The sequence is that of Oryzain beta chain from Oryza sativa subsp. japonica (Rice).